Reading from the N-terminus, the 64-residue chain is Large ribosomal subunit protein bL35 (64 aa).

The interval 1-25 (MPKMKTHRGAAKRLKKTGTGKLKRA) is disordered.

The protein belongs to the bacterial ribosomal protein bL35 family.

This Clostridioides difficile (strain 630) (Peptoclostridium difficile) protein is Large ribosomal subunit protein bL35.